Reading from the N-terminus, the 87-residue chain is DNA polymerase epsilon subunit C (87 aa).

DNA polymerase epsilon is a heterotetramer consisting of cdc20/Pol2, dpb2, dpb3, and dpb4. Also forms a heterodimer consisting dpb3 and dpb4. Interacts directly with cdc20/pol2 and dpb4.

Its subcellular location is the nucleus. Functionally, as accessory component of the DNA polymerase epsilon (DNA polymerase II) participates in chromosomal DNA replication. It is required during synthesis of the leading and lagging DNA strands at the replication fork and binds at/or near replication origins and moves along DNA with the replication fork. It has 3'-5' proofreading exonuclease activity that correct errors arising during DNA replication. It is also involved in DNA synthesis during DNA repair. The dpb3-dpb4 dimer associates with histone deacetylases, chromatin remodelers, and histones and plays a crucial role in the inheritance of histone hypoacetylation and H3K9 methylation in heterochromatin. The dpb3-dpb4 dimer is also required for the recruitment of sir2 to heterochromatin. The sequence is that of DNA polymerase epsilon subunit C from Schizosaccharomyces pombe (strain 972 / ATCC 24843) (Fission yeast).